The sequence spans 430 residues: Aspartate--tRNA(Asp/Asn) ligase (430 aa).

Glu168 lines the L-aspartate pocket. Positions 190–193 (QLYK) are aspartate. Arg212 is a binding site for L-aspartate. Residues 212–214 (RAE), 220–222 (RHL), and Glu353 each bind ATP. The Mg(2+) site is built by Glu353 and Ser356. The L-aspartate site is built by Ser356 and Arg360. Position 401-404 (401-404 (GAER)) interacts with ATP.

It belongs to the class-II aminoacyl-tRNA synthetase family. Type 2 subfamily. As to quaternary structure, homodimer. Mg(2+) is required as a cofactor.

The protein resides in the cytoplasm. The enzyme catalyses tRNA(Asx) + L-aspartate + ATP = L-aspartyl-tRNA(Asx) + AMP + diphosphate. Aspartyl-tRNA synthetase with relaxed tRNA specificity since it is able to aspartylate not only its cognate tRNA(Asp) but also tRNA(Asn). Reaction proceeds in two steps: L-aspartate is first activated by ATP to form Asp-AMP and then transferred to the acceptor end of tRNA(Asp/Asn). This Archaeoglobus fulgidus (strain ATCC 49558 / DSM 4304 / JCM 9628 / NBRC 100126 / VC-16) protein is Aspartate--tRNA(Asp/Asn) ligase.